We begin with the raw amino-acid sequence, 314 residues long: Ficolin-2 (314 aa).

Positions 1 to 17 (MALGSAALFVLTLTVHA) are cleaved as a signal peptide. Residues 40 to 96 (GCPGLPGAAGPKGEAGAKGDRGESGLPGIPGKEGPTGPKGNQGEKGIRGEKGDSGPS) form the Collagen-like domain. A disordered region spans residues 49-101 (GPKGEAGAKGDRGESGLPGIPGKEGPTGPKGNQGEKGIRGEKGDSGPSQSCAT). Residues 97–314 (QSCATGPRTC…KVSEMKVRLI (218 aa)) enclose the Fibrinogen C-terminal domain. 2 cysteine pairs are disulfide-bonded: C99/C127 and C106/C134. D250, D252, S254, and S256 together coordinate Ca(2+). Cysteines 258 and 271 form a disulfide. A glycan (N-linked (GlcNAc...) asparagine) is linked at N301.

Belongs to the ficolin lectin family. In terms of assembly, homotrimer. Interacts with elastin. Interacts with MASP1 and MASP2.

It is found in the secreted. May function in innate immunity through activation of the lectin complement pathway. Calcium-dependent and GlcNAc-binding lectin. The polypeptide is Ficolin-2 (Fcn2) (Mus musculus (Mouse)).